Consider the following 367-residue polypeptide: Sulfate/thiosulfate import ATP-binding protein CysA 2 (367 aa).

One can recognise an ABC transporter domain in the interval 3-237; sequence VRVQNIRKEF…PVSPFVYGFI (235 aa). Position 35–42 (35–42) interacts with ATP; the sequence is GPSGSGKT.

Belongs to the ABC transporter superfamily. Sulfate/tungstate importer (TC 3.A.1.6) family. As to quaternary structure, the complex is composed of two ATP-binding proteins (CysA), two transmembrane proteins (CysT and CysW) and a solute-binding protein (CysP).

Its subcellular location is the cell inner membrane. It catalyses the reaction sulfate(out) + ATP + H2O = sulfate(in) + ADP + phosphate + H(+). The catalysed reaction is thiosulfate(out) + ATP + H2O = thiosulfate(in) + ADP + phosphate + H(+). In terms of biological role, part of the ABC transporter complex CysAWTP involved in sulfate/thiosulfate import. Responsible for energy coupling to the transport system. The sequence is that of Sulfate/thiosulfate import ATP-binding protein CysA 2 from Rhizobium meliloti (strain 1021) (Ensifer meliloti).